Here is a 193-residue protein sequence, read N- to C-terminus: MTKVKICGLSTQEAVTAAVSSGADYIGFVFAKSKRQVSLEQAQKLAKMIPEKVKKVGVFVSPTLEELKIAIKTVPLDLVQVHGDYDEDLQTDFSVPLIRAVQIKKGKENLTSKADYLLFDAPIAGSGETFDWQQLETEQLQKPFFIAGGLTSDNVKECIEHFAPYAVDVSSGVETNGRKDIEKIKRFIESVKK.

The protein belongs to the TrpF family.

The enzyme catalyses N-(5-phospho-beta-D-ribosyl)anthranilate = 1-(2-carboxyphenylamino)-1-deoxy-D-ribulose 5-phosphate. It participates in amino-acid biosynthesis; L-tryptophan biosynthesis; L-tryptophan from chorismate: step 3/5. This Streptococcus mutans serotype c (strain ATCC 700610 / UA159) protein is N-(5'-phosphoribosyl)anthranilate isomerase.